Consider the following 360-residue polypeptide: Phospho-N-acetylmuramoyl-pentapeptide-transferase (360 aa).

Residues 1 to 25 (MLVWLAEHLVKYYSGFNVFSYLTFR) lie on the Periplasmic side of the membrane. A helical membrane pass occupies residues 26–46 (AIVSLLTALFISLWMGPRMIA). Over 47 to 71 (RLQKLSFGQVVRNDGPESHFSKRGT) the chain is Cytoplasmic. Residues 72-92 (PTMGGIMILTAIVISVLLWAY) form a helical membrane-spanning segment. Position 93 (Pro93) is a topological domain, periplasmic. The chain crosses the membrane as a helical span at residues 94-114 (SNPYVWCVLVVLIGYGIIGFV). The Cytoplasmic portion of the chain corresponds to 115-131 (DDYRKVVRKDTKGLIAR). Residues 132–152 (WKYFWMSVIALGVAFALYLVG) form a helical membrane-spanning segment. At 153-167 (KDTPVTQLVVPFFKD) the chain is on the periplasmic side. The chain crosses the membrane as a helical span at residues 168–188 (VMPQLGLFYILLSYFVIVGTG). Topologically, residues 189-198 (NAVNLTDGLD) are cytoplasmic. Residues 199-219 (GLAIMPTVFVAAGFALVAWAT) traverse the membrane as a helical segment. Topologically, residues 220–235 (GNMNFANYLHIPYLRH) are periplasmic. Residues 236–256 (AGELVIVCTAIVGAGLGFLWF) form a helical membrane-spanning segment. The Cytoplasmic portion of the chain corresponds to 257–262 (NTYPAQ). A helical membrane pass occupies residues 263-283 (VFMGDVGSLALGGALGIIAVL). The Periplasmic portion of the chain corresponds to 284–287 (LRQE). The helical transmembrane segment at 288–308 (FLLVIMGGVFVVETLSVILQV) threads the bilayer. Topologically, residues 309 to 337 (GSFKLRGQRIFRMAPIHHHYELKGWPEPR) are cytoplasmic. Residues 338 to 358 (VIVRFWIISLMLVLIGLATLK) form a helical membrane-spanning segment. Residues 359–360 (VR) are Periplasmic-facing.

This sequence belongs to the glycosyltransferase 4 family. MraY subfamily. The cofactor is Mg(2+).

Its subcellular location is the cell inner membrane. It catalyses the reaction UDP-N-acetyl-alpha-D-muramoyl-L-alanyl-gamma-D-glutamyl-meso-2,6-diaminopimeloyl-D-alanyl-D-alanine + di-trans,octa-cis-undecaprenyl phosphate = di-trans,octa-cis-undecaprenyl diphospho-N-acetyl-alpha-D-muramoyl-L-alanyl-D-glutamyl-meso-2,6-diaminopimeloyl-D-alanyl-D-alanine + UMP. It functions in the pathway cell wall biogenesis; peptidoglycan biosynthesis. Its function is as follows. Catalyzes the initial step of the lipid cycle reactions in the biosynthesis of the cell wall peptidoglycan: transfers peptidoglycan precursor phospho-MurNAc-pentapeptide from UDP-MurNAc-pentapeptide onto the lipid carrier undecaprenyl phosphate, yielding undecaprenyl-pyrophosphoryl-MurNAc-pentapeptide, known as lipid I. This Salmonella paratyphi C (strain RKS4594) protein is Phospho-N-acetylmuramoyl-pentapeptide-transferase.